Here is a 135-residue protein sequence, read N- to C-terminus: Large ribosomal subunit protein eL32 (135 aa).

Belongs to the eukaryotic ribosomal protein eL32 family.

The polypeptide is Large ribosomal subunit protein eL32 (rpl32e) (Methanococcus maripaludis (strain DSM 14266 / JCM 13030 / NBRC 101832 / S2 / LL)).